The following is an 83-amino-acid chain: Bublin coiled-coil protein (83 aa).

The disordered stretch occupies residues Met-1–Gly-24. Residues Glu-25 to Leu-74 adopt a coiled-coil conformation. Ser-82 bears the Phosphoserine mark.

The protein belongs to the UPF0184 (EST00098) family.

It localises to the cell junction. It is found in the cytoplasm. The protein localises to the cytoskeleton. Essential for intermediate filament organization in intestinal cells, interacts with intermediate filament and regulates intestinal lumen morphology. The protein is Bublin coiled-coil protein of Homo sapiens (Human).